A 417-amino-acid polypeptide reads, in one-letter code: Tryptophan synthase beta chain (417 aa).

Position 111 is an N6-(pyridoxal phosphate)lysine (K111).

Belongs to the TrpB family. As to quaternary structure, tetramer of two alpha and two beta chains. Requires pyridoxal 5'-phosphate as cofactor.

The enzyme catalyses (1S,2R)-1-C-(indol-3-yl)glycerol 3-phosphate + L-serine = D-glyceraldehyde 3-phosphate + L-tryptophan + H2O. Its pathway is amino-acid biosynthesis; L-tryptophan biosynthesis; L-tryptophan from chorismate: step 5/5. Functionally, the beta subunit is responsible for the synthesis of L-tryptophan from indole and L-serine. The sequence is that of Tryptophan synthase beta chain from Fervidobacterium nodosum (strain ATCC 35602 / DSM 5306 / Rt17-B1).